The chain runs to 379 residues: MTAIRYEFIKKCKQTGARLGRVHTPHGSFDTPTFMPVGTLATVKTMSPEELKAMDSGIILSNTYHLWLRPGHEIVREAGGLHKFMNWDRAILTDSGGFQVFSLSDFRRIEEEGVYFRNHLNGDKLFLSPEKAMEIQNALGSDIMMAFDECPPFPATFEYMKKSVERTSRWAERCLNAHQRPEDQGLFGIVQGGEFEELRRQSAKDLVSMDFPGYAVGGLSVGEPKDIMNRVLEFTTPLLPENKPRYLMGVGSPDSLIDGAIRGIDMFDCVLPTRIARNGTCMTSQGRLVVKNAKFARDFGPLDPNCDCYTCKNYSRAYIRHLMKCDETFGIRLTSYHNLHFLLNLMEQVRQAIREDRLGDFREEFFEQYGFNKPNAKNF.

Catalysis depends on D94, which acts as the Proton acceptor. Residues 94-98 (DSGGF), D148, Q191, and G218 each bind substrate. Residues 249-255 (GVGSPDS) form an RNA binding region. D268 (nucleophile) is an active-site residue. Residues 273–277 (TRIAR) are RNA binding; important for wobble base 34 recognition. Zn(2+) is bound by residues C306, C308, C311, and H337.

The protein belongs to the queuine tRNA-ribosyltransferase family. As to quaternary structure, homodimer. Within each dimer, one monomer is responsible for RNA recognition and catalysis, while the other monomer binds to the replacement base PreQ1. The cofactor is Zn(2+).

It catalyses the reaction 7-aminomethyl-7-carbaguanine + guanosine(34) in tRNA = 7-aminomethyl-7-carbaguanosine(34) in tRNA + guanine. It participates in tRNA modification; tRNA-queuosine biosynthesis. Its function is as follows. Catalyzes the base-exchange of a guanine (G) residue with the queuine precursor 7-aminomethyl-7-deazaguanine (PreQ1) at position 34 (anticodon wobble position) in tRNAs with GU(N) anticodons (tRNA-Asp, -Asn, -His and -Tyr). Catalysis occurs through a double-displacement mechanism. The nucleophile active site attacks the C1' of nucleotide 34 to detach the guanine base from the RNA, forming a covalent enzyme-RNA intermediate. The proton acceptor active site deprotonates the incoming PreQ1, allowing a nucleophilic attack on the C1' of the ribose to form the product. After dissociation, two additional enzymatic reactions on the tRNA convert PreQ1 to queuine (Q), resulting in the hypermodified nucleoside queuosine (7-(((4,5-cis-dihydroxy-2-cyclopenten-1-yl)amino)methyl)-7-deazaguanosine). This is Queuine tRNA-ribosyltransferase from Bacillus cytotoxicus (strain DSM 22905 / CIP 110041 / 391-98 / NVH 391-98).